Here is a 533-residue protein sequence, read N- to C-terminus: Calcineurin-interacting protein 3 (533 aa).

3 disordered regions span residues 1–30 (MRSL…NMDI), 53–85 (PRKQ…YTKR), and 359–404 (MDMS…LTLP). Residues 61–85 (KRAEPVSEEHRKKESSKNSREYTKR) show a composition bias toward basic and acidic residues. The segment covering 359 to 372 (MDMSQTLSPEQTLS) has biased composition (polar residues). A compositionally biased stretch (basic and acidic residues) spans 373–384 (PREKLQVQDRKI).

The protein localises to the nucleus. The protein is Calcineurin-interacting protein 3 of Caenorhabditis elegans.